Reading from the N-terminus, the 510-residue chain is Amidophosphoribosyltransferase (510 aa).

The active-site Nucleophile is C2. Positions 2 to 239 (CGILGIALAD…PGEAVIIPKD (238 aa)) constitute a Glutamine amidotransferase type-2 domain. Mg(2+)-binding residues include D373 and D374.

This sequence in the C-terminal section; belongs to the purine/pyrimidine phosphoribosyltransferase family. The cofactor is Mg(2+).

The catalysed reaction is 5-phospho-beta-D-ribosylamine + L-glutamate + diphosphate = 5-phospho-alpha-D-ribose 1-diphosphate + L-glutamine + H2O. It participates in purine metabolism; IMP biosynthesis via de novo pathway; N(1)-(5-phospho-D-ribosyl)glycinamide from 5-phospho-alpha-D-ribose 1-diphosphate: step 1/2. The protein is Amidophosphoribosyltransferase (ADE4) of Lachancea kluyveri (Yeast).